A 601-amino-acid polypeptide reads, in one-letter code: Elongation factor 4 (601 aa).

The 183-residue stretch at 7–189 (DTIRNFSIVA…AIVAKLPPPK (183 aa)) folds into the tr-type G domain. Residues 19–24 (DHGKST) and 136–139 (NKID) each bind GTP.

The protein belongs to the TRAFAC class translation factor GTPase superfamily. Classic translation factor GTPase family. LepA subfamily.

It localises to the cell inner membrane. The catalysed reaction is GTP + H2O = GDP + phosphate + H(+). In terms of biological role, required for accurate and efficient protein synthesis under certain stress conditions. May act as a fidelity factor of the translation reaction, by catalyzing a one-codon backward translocation of tRNAs on improperly translocated ribosomes. Back-translocation proceeds from a post-translocation (POST) complex to a pre-translocation (PRE) complex, thus giving elongation factor G a second chance to translocate the tRNAs correctly. Binds to ribosomes in a GTP-dependent manner. This Methylobacterium sp. (strain 4-46) protein is Elongation factor 4.